A 36-amino-acid chain; its full sequence is MSDIN-like toxin proprotein 10 (36 aa).

A propeptide spanning residues 1–10 (MSDINATRLP) is cleaved from the precursor. The segment at residues 11–19 (GAYPPVPMP) is a cross-link (cyclopeptide (Gly-Pro)). The propeptide occupies 20 to 36 (CVGDADNFTLTRGENLC).

The protein belongs to the MSDIN fungal toxin family. In terms of processing, processed by the macrocyclase-peptidase enzyme POPB to yield a toxic cyclic nonapeptide. POPB first removes 10 residues from the N-terminus. Conformational trapping of the remaining peptide forces the enzyme to release this intermediate rather than proceed to macrocyclization. The enzyme rebinds the remaining peptide in a different conformation and catalyzes macrocyclization of the N-terminal 9 residues.

Functionally, probable toxin that belongs to the MSDIN-like toxin family responsible for a large number of food poisoning cases and deaths. The polypeptide is MSDIN-like toxin proprotein 10 (Amanita bisporigera (Destroying angel)).